Consider the following 338-residue polypeptide: Methionine synthase (338 aa).

Residues histidine 210, cysteine 212, glutamate 234, and cysteine 294 each contribute to the Zn(2+) site.

This sequence belongs to the archaeal MetE family. Zn(2+) serves as cofactor.

It functions in the pathway amino-acid biosynthesis; L-methionine biosynthesis via de novo pathway. Its function is as follows. Catalyzes the transfer of a methyl group to L-homocysteine resulting in methionine formation. The physiological methyl donor is unknown. The protein is Methionine synthase of Pyrococcus furiosus (strain ATCC 43587 / DSM 3638 / JCM 8422 / Vc1).